The chain runs to 279 residues: MSALEWYAHKSLGDGIFWIQERFYESGNRANIWLVRGSEQDVVIDTGLGLRSLPEYLYSSGLLQDREAKEDAARRPLLAVATHVHFDHSGGLYQFDRVAVHHAEAEALARGDNFETVTWLSDSEVVRTPSPGWRARQFRVQAVQPTLILQDGDVINLGDRQLTVMHMPGHSRGSICLHDKDRKILFSGDVVYDGSLIDWLPYSRISDYVGTCERLIELVDRGLVEKVLPGHFNTFGAERLFRLASNYISKAGICHKVSTFAMRSLASLALRVTNSRTSP.

An N-acetylserine modification is found at serine 2. Residues histidine 83, histidine 85, aspartate 87, histidine 88, histidine 170, aspartate 189, and histidine 231 each coordinate Zn(2+). A lipid anchor (S-palmitoyl cysteine) is attached at cysteine 254.

Belongs to the metallo-beta-lactamase superfamily. Glyoxalase II family. The cofactor is Zn(2+). In terms of processing, palmitoylated on Cys-254 by ZDHHC20.

Its subcellular location is the endoplasmic reticulum membrane. The protein resides in the cell membrane. The catalysed reaction is hexadecanoyl-CoA + H2O = hexadecanoate + CoA + H(+). It carries out the reaction dodecanoyl-CoA + H2O = dodecanoate + CoA + H(+). It catalyses the reaction tetradecanoyl-CoA + H2O = tetradecanoate + CoA + H(+). The enzyme catalyses octadecanoyl-CoA + H2O = octadecanoate + CoA + H(+). The catalysed reaction is a beta-lactam + H2O = a substituted beta-amino acid. Its activity is regulated as follows. Beta-lactamase activity is inhibited by sulbactam. Functionally, acyl-CoA thioesterases are a group of enzymes that catalyze the hydrolysis of acyl-CoAs to the free fatty acid and coenzyme A (CoASH), providing the potential to regulate intracellular levels of acyl-CoAs, free fatty acids and CoASH. Has an acyl-CoA thioesterase activity towards the long chain fatty acyl-CoA thioester palmitoyl-CoA (hexadecanoyl-CoA; C16:0-CoA). Displays a substrate preference for fatty acyl-CoAs with chain-lengths C12-C18. Possesses beta-lactamase activity, catalyzing the hydrolysis of penicillin G and nitrocefin. Exhibits no activity towards other beta-lactam antibiotic classes including cephalosporins (cefotaxime) and carbapenems (imipenem). The sequence is that of Acyl-coenzyme A thioesterase MBLAC2 (MBLAC2) from Homo sapiens (Human).